A 546-amino-acid chain; its full sequence is Chaperonin GroEL (546 aa).

ATP is bound by residues 30 to 33 (TLGP), K51, 87 to 91 (DGTTT), G415, and D495.

This sequence belongs to the chaperonin (HSP60) family. Forms a cylinder of 14 subunits composed of two heptameric rings stacked back-to-back. Interacts with the co-chaperonin GroES.

Its subcellular location is the cytoplasm. The enzyme catalyses ATP + H2O + a folded polypeptide = ADP + phosphate + an unfolded polypeptide.. Together with its co-chaperonin GroES, plays an essential role in assisting protein folding. The GroEL-GroES system forms a nano-cage that allows encapsulation of the non-native substrate proteins and provides a physical environment optimized to promote and accelerate protein folding. The polypeptide is Chaperonin GroEL (Brucella melitensis biotype 1 (strain ATCC 23456 / CCUG 17765 / NCTC 10094 / 16M)).